A 144-amino-acid polypeptide reads, in one-letter code: Histone H3.1 (144 aa).

Residues 1 to 45 (MARTKQSARKTTGGKAPRKQLSAKSARKGVSPASSAGAKKSRYRP) form a disordered region. An N6,N6,N6-trimethyllysine; alternate modification is found at K5. At K5 the chain carries N6,N6-dimethyllysine; alternate. N6-methyllysine; alternate occurs at positions 5 and 10. N6-acetyllysine; alternate is present on residues K10, K15, K19, K24, K28, and K39. K15 bears the N6,N6-dimethyllysine; alternate mark. N6-methyllysine; alternate is present on residues K19, K24, K28, and K39. Residues K28 and K39 each carry the N6,N6,N6-trimethyllysine; alternate modification. An N6,N6-dimethyllysine; alternate mark is found at K28 and K39. At K58 the chain carries N6-acetyllysine.

Belongs to the histone H3 family. In terms of assembly, the nucleosome is a histone octamer containing two molecules each of H2A, H2B, H3 and H4 assembled in one H3-H4 heterotetramer and two H2A-H2B heterodimers. The octamer wraps approximately 147 bp of DNA. Mono-, di- and trimethylated to form H3K4me1/2/3. H3K4me activates gene expression by regulating transcription elongation and plays a role in telomere length maintenance. H3K4me enrichment correlates with transcription levels, and occurs in a 5' to 3' gradient with H3K4me3 enrichment at the 5'-end of genes, shifting to H3K4me2 and then H3K4me1. H3K36me represses gene expression. Post-translationally, acetylation of histone H3 leads to transcriptional activation.

It localises to the nucleus. The protein localises to the chromosome. Functionally, core component of nucleosome. Nucleosomes wrap and compact DNA into chromatin, limiting DNA accessibility to the cellular machineries which require DNA as a template. Histones thereby play a central role in transcription regulation, DNA repair, DNA replication and chromosomal stability. DNA accessibility is regulated via a complex set of post-translational modifications of histones, also called histone code, and nucleosome remodeling. This Encephalitozoon cuniculi (strain GB-M1) (Microsporidian parasite) protein is Histone H3.1 (HHT1).